The sequence spans 448 residues: Probable glycine dehydrogenase (decarboxylating) subunit 1 (448 aa).

This sequence belongs to the GcvP family. N-terminal subunit subfamily. As to quaternary structure, the glycine cleavage system is composed of four proteins: P, T, L and H. In this organism, the P 'protein' is a heterodimer of two subunits.

It carries out the reaction N(6)-[(R)-lipoyl]-L-lysyl-[glycine-cleavage complex H protein] + glycine + H(+) = N(6)-[(R)-S(8)-aminomethyldihydrolipoyl]-L-lysyl-[glycine-cleavage complex H protein] + CO2. In terms of biological role, the glycine cleavage system catalyzes the degradation of glycine. The P protein binds the alpha-amino group of glycine through its pyridoxal phosphate cofactor; CO(2) is released and the remaining methylamine moiety is then transferred to the lipoamide cofactor of the H protein. This chain is Probable glycine dehydrogenase (decarboxylating) subunit 1, found in Shouchella clausii (strain KSM-K16) (Alkalihalobacillus clausii).